The sequence spans 257 residues: MVEDHKHEESILEKIVEKIHGHGDSSSLSDSDDDKKSTSSSSSSFKSKIYRLFGREKPVHKVLGGGKPADIFLWRNKKVSGGVLGAVTASWVLFELFEYHLLAFLCHFAIFALAALFLWSNACTFIHKSTPHIPEVHIPEDPILQLVSGLRIEINRGLTLLRNIASGKDVKKFILVIAGLWVLSIIGSCYNFLTLFYTATVLLFTIPVLYEKYEDKVDAYGEKAMREIKKQYAVLDEKVLRKVISKIPRGALNKKKD.

The interval I19 to S42 is disordered. The region spanning P68–D257 is the Reticulon domain. The next 3 helical transmembrane spans lie at K78–E98, Y99–W119, and F173–L193.

Interacts with VirB2.

Its subcellular location is the endoplasmic reticulum membrane. In terms of biological role, plays a role in the Agrobacterium-mediated plant transformation via its interaction with VirB2, the major component of the T-pilus. This is Reticulon-like protein B4 (RTNLB4) from Arabidopsis thaliana (Mouse-ear cress).